A 232-amino-acid chain; its full sequence is Large ribosomal subunit protein uL1 (232 aa).

This sequence belongs to the universal ribosomal protein uL1 family. As to quaternary structure, part of the 50S ribosomal subunit.

Functionally, binds directly to 23S rRNA. The L1 stalk is quite mobile in the ribosome, and is involved in E site tRNA release. In terms of biological role, protein L1 is also a translational repressor protein, it controls the translation of the L11 operon by binding to its mRNA. This Cereibacter sphaeroides (strain ATCC 17025 / ATH 2.4.3) (Rhodobacter sphaeroides) protein is Large ribosomal subunit protein uL1.